A 404-amino-acid chain; its full sequence is Clavilactone A biosynthesis cluster protein Y (404 aa).

Functionally, part of the gene cluster that mediates the biosynthesis of clavilactone A, a meroterpenoid that features a unique benzo-fused ten-membered carbocyclic ring unit with an alpha,beta-epoxy-gamma-lactone moiety, forming an intriguing 10/5/3 tricyclic nested skeleton. ClaR, ClaS and ClaT are sufficient to produce clavilactone A and the function of claY, if any, has still to be identified. The biosynthesis begins with the prenyltransferase claS that transfers geranyl pyrophosphate (GPP) to hydroquinone to produces geranylhydroquinon. The cytochrome P450 monooxygenase claR then catalyzes the diradical coupling reaction between the intramolecular hydroquinone and allyl moieties to form the benzo-fused ten-membered carbocyclic ring unit of wigantol. Finally the cytochrome P450 monooxygenase claT exquisitely and stereoselectively assembles the alpha,beta-epoxy-gamma-lactone moiety, producing clavilactone A via arnebinol A. This is Clavilactone A biosynthesis cluster protein Y from Ampulloclitocybe clavipes (Club foot).